We begin with the raw amino-acid sequence, 233 residues long: 7-cyano-7-deazaguanine synthase (233 aa).

Phenylalanine 11–leucine 21 contacts ATP. Zn(2+) is bound by residues cysteine 199, cysteine 214, cysteine 217, and cysteine 220.

It belongs to the QueC family. Zn(2+) serves as cofactor.

It carries out the reaction 7-carboxy-7-deazaguanine + NH4(+) + ATP = 7-cyano-7-deazaguanine + ADP + phosphate + H2O + H(+). It participates in purine metabolism; 7-cyano-7-deazaguanine biosynthesis. Its function is as follows. Catalyzes the ATP-dependent conversion of 7-carboxy-7-deazaguanine (CDG) to 7-cyano-7-deazaguanine (preQ(0)). The protein is 7-cyano-7-deazaguanine synthase of Herminiimonas arsenicoxydans.